Consider the following 620-residue polypeptide: Glutathione-regulated potassium-efflux system protein KefC (620 aa).

At M1–S3 the chain is on the periplasmic side. A helical membrane pass occupies residues H4–V24. A topological domain (cytoplasmic) is located at residue R25. A helical membrane pass occupies residues L26–L46. The Periplasmic portion of the chain corresponds to R47–E53. The helical transmembrane segment at S54–L74 threads the bilayer. Residues D75–G89 lie on the Cytoplasmic side of the membrane. Residues G90–L110 traverse the membrane as a helical segment. At R111–Q113 the chain is on the periplasmic side. The chain crosses the membrane as a helical span at residues V114–M134. Residues N135–A148 are Cytoplasmic-facing. The helical transmembrane segment at F149 to L169 threads the bilayer. The Periplasmic portion of the chain corresponds to A170–T177. Residues L178–L198 traverse the membrane as a helical segment. Residues G199–S213 lie on the Cytoplasmic side of the membrane. Residues G214–L233 traverse the membrane as a helical segment. The Periplasmic portion of the chain corresponds to L234–E236. The helical transmembrane segment at V237–S254 threads the bilayer. Residues S255–K269 lie on the Cytoplasmic side of the membrane. A helical membrane pass occupies residues G270–V290. At E291–P293 the chain is on the periplasmic side. Residues L294–V314 traverse the membrane as a helical segment. Residues A315–R326 lie on the Cytoplasmic side of the membrane. The helical transmembrane segment at W327–Q347 threads the bilayer. Over M348–K358 the chain is Periplasmic. Residues A359 to T379 traverse the membrane as a helical segment. Topologically, residues R380–I620 are cytoplasmic. The RCK N-terminal domain occupies Q399–T518. Positions Q599–I620 are disordered.

It belongs to the monovalent cation:proton antiporter 2 (CPA2) transporter (TC 2.A.37) family. KefC subfamily. Homodimer. Interacts with the regulatory subunit KefF.

It is found in the cell inner membrane. Its function is as follows. Pore-forming subunit of a potassium efflux system that confers protection against electrophiles. Catalyzes K(+)/H(+) antiport. This Salmonella typhimurium (strain LT2 / SGSC1412 / ATCC 700720) protein is Glutathione-regulated potassium-efflux system protein KefC.